Consider the following 137-residue polypeptide: Small ribosomal subunit protein uS12 (137 aa).

Residues 1 to 57 (MPTINQLVRKPRKSKTKQSDSPVLNRGFNSKKKQFTNLNSPQKRGVCTRVGTMTPRK) form a disordered region. Aspartate 102 is subject to 3-methylthioaspartic acid. Residues 118-137 (SGVDGRRQGRSLYGTKKPKN) form a disordered region.

The protein belongs to the universal ribosomal protein uS12 family. Part of the 30S ribosomal subunit. Contacts proteins S8 and S17. May interact with IF1 in the 30S initiation complex.

With S4 and S5 plays an important role in translational accuracy. Its function is as follows. Interacts with and stabilizes bases of the 16S rRNA that are involved in tRNA selection in the A site and with the mRNA backbone. Located at the interface of the 30S and 50S subunits, it traverses the body of the 30S subunit contacting proteins on the other side and probably holding the rRNA structure together. The combined cluster of proteins S8, S12 and S17 appears to hold together the shoulder and platform of the 30S subunit. The polypeptide is Small ribosomal subunit protein uS12 (Staphylococcus epidermidis (strain ATCC 12228 / FDA PCI 1200)).